Consider the following 312-residue polypeptide: Short-chain dehydrogenase/reductase pkfC (312 aa).

NADP(+)-binding residues include Lys56, Asn108, and Lys140. Ser164 (proton donor) is an active-site residue. NADP(+) is bound by residues Tyr193 and Lys197. Tyr193 acts as the Proton acceptor in catalysis. The active-site Lowers pKa of active site Tyr is Lys197.

It belongs to the short-chain dehydrogenases/reductases (SDR) family.

It functions in the pathway secondary metabolite biosynthesis. Short-chain dehydrogenase/reductase; part of the gene cluster that mediates the biosynthesis of aspernidine A, a prenylated isoindolinone. The starting point of the biosynthesis of aspernidin A is the production of orsellinaldehyde by the non-reducing polyketide synthase pkfA. Hydroxylation, methylation of one of the phenol groups, and prenylation, presumably catalyzed by the prenyltransferase pkfE, would be needed to yield aspernidine D. Subsequently, the cytochrome P450 monooxygenase pkfB is responsible for hydroxylation of aspernidine D to yield aspernidine E. The dehydrogenase pkfF may be responsible for further oxidation of aspernidine E to form a dialdehyde intermediate which is further transformed in a series of steps, some of which are enzyme-mediated, to generate aspernidine A. The possibility that additional enzymes outside of the cluster are involved in aspernidine A biosynthesis cannot be excluded. In Emericella nidulans (strain FGSC A4 / ATCC 38163 / CBS 112.46 / NRRL 194 / M139) (Aspergillus nidulans), this protein is Short-chain dehydrogenase/reductase pkfC.